A 146-amino-acid chain; its full sequence is Hemoglobin subunit beta-1 (146 aa).

Residues 2-146 (HWTAEEKALI…VAHALARRYH (145 aa)) enclose the Globin domain. H92 is a heme b binding site.

This sequence belongs to the globin family. In terms of assembly, heterotetramer of two alpha chains and two beta chains. As to expression, red blood cells.

In terms of biological role, involved in oxygen transport from the lung to the various peripheral tissues. The polypeptide is Hemoglobin subunit beta-1 (Saara hardwickii (Indian spiny-tailed lizard)).